Reading from the N-terminus, the 399-residue chain is Tryptophan synthase beta chain (399 aa).

At Lys92 the chain carries N6-(pyridoxal phosphate)lysine.

It belongs to the TrpB family. In terms of assembly, tetramer of two alpha and two beta chains. The cofactor is pyridoxal 5'-phosphate.

It catalyses the reaction (1S,2R)-1-C-(indol-3-yl)glycerol 3-phosphate + L-serine = D-glyceraldehyde 3-phosphate + L-tryptophan + H2O. It participates in amino-acid biosynthesis; L-tryptophan biosynthesis; L-tryptophan from chorismate: step 5/5. Its function is as follows. The beta subunit is responsible for the synthesis of L-tryptophan from indole and L-serine. This Legionella pneumophila (strain Paris) protein is Tryptophan synthase beta chain.